The following is a 538-amino-acid chain: Importin subunit alpha-6 (538 aa).

One can recognise an IBB domain in the interval 1 to 58; it reads MSYKPSAKTEVRRNRYKVSVDADEGRRRREDNMVEIRKNKREENLQKKRREGFNPSMA. Positions 1-69 are disordered; that stretch reads MSYKPSAKTE…QPGQDFSSSL (69 aa). Basic and acidic residues predominate over residues 7–46; that stretch reads AKTEVRRNRYKVSVDADEGRRRREDNMVEIRKNKREENLQ. The segment covering 56–69 has biased composition (polar residues); it reads SMASQPGQDFSSSL. 8 ARM repeats span residues 109-149, 152-191, 194-234, 236-275, 278-317, 320-360, 363-402, and 406-445; these read NPPI…NIAS, SENT…NVAG, PKCR…NFCR, KPQP…YLSD, NEKI…NIVT, DIQT…NITA, TSQI…NATS, and HDQI…NILK.

It belongs to the importin alpha family. In terms of assembly, forms a complex with importin subunit beta-1.

It localises to the nucleus envelope. Its function is as follows. Binds to conventional NLS motifs and mediates nuclear protein import across the nuclear envelope. Acts as a cellular receptor for the nuclear import of the virD2 protein of Agrobacterium, but is not essential for Agrobacterium-mediated root transformation. The protein is Importin subunit alpha-6 of Arabidopsis thaliana (Mouse-ear cress).